A 314-amino-acid chain; its full sequence is tRNA-cytidine(32) 2-sulfurtransferase (314 aa).

Positions 39–44 (SGGKDS) match the PP-loop motif motif. 3 residues coordinate [4Fe-4S] cluster: Cys-114, Cys-117, and Cys-205.

It belongs to the TtcA family. In terms of assembly, homodimer. Mg(2+) is required as a cofactor. It depends on [4Fe-4S] cluster as a cofactor.

The protein localises to the cytoplasm. The enzyme catalyses cytidine(32) in tRNA + S-sulfanyl-L-cysteinyl-[cysteine desulfurase] + AH2 + ATP = 2-thiocytidine(32) in tRNA + L-cysteinyl-[cysteine desulfurase] + A + AMP + diphosphate + H(+). The protein operates within tRNA modification. Its function is as follows. Catalyzes the ATP-dependent 2-thiolation of cytidine in position 32 of tRNA, to form 2-thiocytidine (s(2)C32). The sulfur atoms are provided by the cysteine/cysteine desulfurase (IscS) system. The sequence is that of tRNA-cytidine(32) 2-sulfurtransferase from Cupriavidus metallidurans (strain ATCC 43123 / DSM 2839 / NBRC 102507 / CH34) (Ralstonia metallidurans).